Here is a 307-residue protein sequence, read N- to C-terminus: Thymidylate synthase (307 aa).

The disordered stretch occupies residues 1 to 22 (MLVEGSELQSGAQQPRTEAPQH). A compositionally biased stretch (polar residues) spans 7–16 (ELQSGAQQPR). Arginine 44 contacts dUMP. A Phosphoserine modification is found at serine 108. DUMP-binding positions include 169–170 (RR), 189–190 (CH), 209–212 (RSGD), asparagine 220, and 250–252 (HIY). Cysteine 189 functions as the Nucleophile in the catalytic mechanism. Aspartate 212 is a (6R)-5,10-methylene-5,6,7,8-tetrahydrofolate binding site. Glycyl lysine isopeptide (Lys-Gly) (interchain with G-Cter in SUMO2) cross-links involve residues lysine 286 and lysine 302. A (6R)-5,10-methylene-5,6,7,8-tetrahydrofolate-binding site is contributed by alanine 306.

The protein belongs to the thymidylate synthase family. In terms of assembly, homodimer.

It localises to the nucleus. It is found in the cytoplasm. Its subcellular location is the mitochondrion. The protein resides in the mitochondrion matrix. The protein localises to the mitochondrion inner membrane. The catalysed reaction is dUMP + (6R)-5,10-methylene-5,6,7,8-tetrahydrofolate = 7,8-dihydrofolate + dTMP. The protein operates within pyrimidine metabolism; dTTP biosynthesis. In terms of biological role, catalyzes the reductive methylation of 2'-deoxyuridine 5'-monophosphate (dUMP) to thymidine 5'-monophosphate (dTMP), using the cosubstrate, 5,10- methylenetetrahydrofolate (CH2H4folate) as a 1-carbon donor and reductant and contributes to the de novo mitochondrial thymidylate biosynthesis pathway. This is Thymidylate synthase (Tyms) from Rattus norvegicus (Rat).